The following is a 502-amino-acid chain: MKYIMFQGTSSNAGKTLTVAALCNLLSRKGYRVTPFKSQNMSLNSYTTVDNDEMSIAQVMQSEAAGIEPNCNMNPILLKPKEDFTSQVIVQGKPAGNMRFDDYQNNFRTQAIKAIEESLEYLKEDYDITVIEGAGSPAEINMYDKDLANMLIARMTDADVILVADIDQGGVFASIVGTYFLIPEEDRKRIKAVIINKFRGNADVLKPGIEKIEELTNIPVIGIIPYDETLNLPEEDSASLSTHHFSENEKITIGTLRLPRISNFTDIDPLDYEEDIGIKLVSIYDDLEDLDALIIPGTRNTVNDLVELKKSGAFDKIKKISKEIPIFGICGGYQMLSNNIIDESCSESKYGSVEGLGLLDMTTEFGQIEKVVQQSEGTIIKDSSLGFEKDTKVTGYELHEGITILGDVEPLIKIKKGQGNDESGLYDGAINGNVCGTYFHGIFHNFEFRRKFTDQLRINKGLKPLGLTKDDFKESKRVNYDQLGDLFANNVDMSFFKDLLRD.

The GATase cobBQ-type domain occupies 250–448; it reads KITIGTLRLP…FHGIFHNFEF (199 aa). Cysteine 330 serves as the catalytic Nucleophile. Histidine 440 is an active-site residue.

This sequence belongs to the CobB/CobQ family. CobQ subfamily.

The protein operates within cofactor biosynthesis; adenosylcobalamin biosynthesis. Catalyzes amidations at positions B, D, E, and G on adenosylcobyrinic A,C-diamide. NH(2) groups are provided by glutamine, and one molecule of ATP is hydrogenolyzed for each amidation. The polypeptide is Probable cobyric acid synthase (Methanosphaera stadtmanae (strain ATCC 43021 / DSM 3091 / JCM 11832 / MCB-3)).